The primary structure comprises 307 residues: Acetyl-coenzyme A carboxylase carboxyl transferase subunit beta (307 aa).

In terms of domain architecture, CoA carboxyltransferase N-terminal spans 28-297; that stretch reads LWVKCPDTGQ…TPQPGTAPEP (270 aa). Residues 286–307 form a disordered region; sequence RRTPQPGTAPEPTTPEPLPNAA. The span at 292 to 307 shows a compositional bias: pro residues; that stretch reads GTAPEPTTPEPLPNAA.

It belongs to the AccD/PCCB family. In terms of assembly, acetyl-CoA carboxylase is a heterohexamer composed of biotin carboxyl carrier protein (AccB), biotin carboxylase (AccC) and two subunits each of ACCase subunit alpha (AccA) and ACCase subunit beta (AccD).

The protein resides in the cytoplasm. The enzyme catalyses N(6)-carboxybiotinyl-L-lysyl-[protein] + acetyl-CoA = N(6)-biotinyl-L-lysyl-[protein] + malonyl-CoA. The protein operates within lipid metabolism; malonyl-CoA biosynthesis; malonyl-CoA from acetyl-CoA: step 1/1. In terms of biological role, component of the acetyl coenzyme A carboxylase (ACC) complex. Biotin carboxylase (BC) catalyzes the carboxylation of biotin on its carrier protein (BCCP) and then the CO(2) group is transferred by the transcarboxylase to acetyl-CoA to form malonyl-CoA. The polypeptide is Acetyl-coenzyme A carboxylase carboxyl transferase subunit beta (Methylorubrum extorquens (strain CM4 / NCIMB 13688) (Methylobacterium extorquens)).